Here is a 611-residue protein sequence, read N- to C-terminus: MQKSALAIALASLLTPISYLHANEAQPQETVVVTANRFEQKASSTLADVEIITRQDIEQTQAKTLPELLRRLTGVQITQNGGRGQLASLFVRGTSSDQVLVLVDGIRFARAAKGAVDFNQIPLTYVDRIEYVRGARASLYGSEAIGGVINIITKARSQQQGTTVSAGLGSLDYQELSIASGVAIGEKGQMNVALGTESDKGYNVRPVPGVNDGDRHGFRSDNALLGYVHQFDESWSLFANARAYENIYQYDNSYGTRDYKEAEKDDLSFTIGTQYQSERWVSELQLTTQKQKSWDYTQSKGKYSDTSDNLEQRNIQWINRYLVNDVWTFAGGVDWRDESYIDKTADKEFDRSNTAAFAVVAAEWQQWLLEASLRFDDNQEYGSQTTHNIALGYQFIPEFGVKASYGSAFKAPNLYQQYDPSYGNVNLQPEDADSAELSFYGLFSGIKWSITGYDYKINNLIDYNSTTKNYQNVIGESNIKGVEFTAEFATGIVQHQLSVDLKDADDSKGKTLQRRAEHMYKWNALVAFEQVDWSIGYQYVGKRPDLDYNTYPTQNITLDAYSLVDTSVSYYVTDSTTISARIDNLLDKEYETANGYPAAERAYYLNIGYQF.

The N-terminal stretch at M1–A22 is a signal peptide. Positions E29 to N36 match the TonB box motif. Positions K41–K154 constitute a TBDR plug domain. Positions Q159–F611 constitute a TBDR beta-barrel domain. Residues N594–F611 carry the TonB C-terminal box motif.

The protein belongs to the TonB-dependent receptor family. BtuB (TC 1.B.14.3.1) subfamily.

It is found in the cell outer membrane. In terms of biological role, involved in the active translocation of vitamin B12 (cyanocobalamin) across the outer membrane to the periplasmic space. It derives its energy for transport by interacting with the trans-periplasmic membrane protein TonB. The chain is Vitamin B12 transporter BtuB from Vibrio cholerae serotype O1 (strain ATCC 39541 / Classical Ogawa 395 / O395).